Here is a 96-residue protein sequence, read N- to C-terminus: Protein RnfH (96 aa).

This sequence belongs to the UPF0125 (RnfH) family.

The sequence is that of Protein RnfH from Escherichia coli O17:K52:H18 (strain UMN026 / ExPEC).